The chain runs to 306 residues: Putative B3 domain-containing protein Os03g0621600 (306 aa).

Residues 29–122 constitute a DNA-binding region (TF-B3 1); sequence FSVLCLMPIM…QLKTLIFDSS (94 aa). Positions 139–166 are disordered; that stretch reads YDIAMRNSQDEKKKRKQRDISRQGTVKP. The segment at residues 210-306 is a DNA-binding region (TF-B3 2); the sequence is GYVMNNSSIH…VMDVHIIRRK (97 aa).

It localises to the nucleus. This chain is Putative B3 domain-containing protein Os03g0621600, found in Oryza sativa subsp. japonica (Rice).